We begin with the raw amino-acid sequence, 207 residues long: Dephospho-CoA kinase (207 aa).

The 197-residue stretch at 11-207 (RIGLTGGIAS…LLKMSPTAEL (197 aa)) folds into the DPCK domain. 19-24 (ASGKSS) is a binding site for ATP.

Belongs to the CoaE family.

It localises to the cytoplasm. The catalysed reaction is 3'-dephospho-CoA + ATP = ADP + CoA + H(+). It functions in the pathway cofactor biosynthesis; coenzyme A biosynthesis; CoA from (R)-pantothenate: step 5/5. Functionally, catalyzes the phosphorylation of the 3'-hydroxyl group of dephosphocoenzyme A to form coenzyme A. The chain is Dephospho-CoA kinase from Synechococcus sp. (strain CC9605).